Here is a 373-residue protein sequence, read N- to C-terminus: uncharacterized protein (373 aa).

This sequence belongs to the glycosyltransferase 28 family.

This is an uncharacterized protein from Bacillus subtilis (strain 168).